We begin with the raw amino-acid sequence, 332 residues long: Cyclin-dependent kinase 1 (332 aa).

One can recognise a Protein kinase domain in the interval 22-312; the sequence is FTKLEKIGEG…AKKALVHPYF (291 aa). ATP contacts are provided by residues 28 to 36 and Lys51; that span reads IGEGTYGVV. Thr32 carries the phosphothreonine modification. Residue Tyr33 is modified to Phosphotyrosine. Catalysis depends on Asp146, which acts as the Proton acceptor.

This sequence belongs to the protein kinase superfamily. CMGC Ser/Thr protein kinase family. CDC2/CDKX subfamily. As to quaternary structure, forms a stable but non-covalent complex with a regulatory subunit and with a cyclin. Interacts with cks-1. In terms of processing, phosphorylated.

Its subcellular location is the nucleus. It is found in the cytoplasm. The protein localises to the cytoskeleton. The protein resides in the microtubule organizing center. It localises to the centrosome. Its subcellular location is the chromosome. It catalyses the reaction L-seryl-[protein] + ATP = O-phospho-L-seryl-[protein] + ADP + H(+). The enzyme catalyses L-threonyl-[protein] + ATP = O-phospho-L-threonyl-[protein] + ADP + H(+). The catalysed reaction is [DNA-directed RNA polymerase] + ATP = phospho-[DNA-directed RNA polymerase] + ADP + H(+). Phosphorylation both activates and inactivates the enzyme depending on the site of phosphorylation. In terms of biological role, plays a key role in the control of the eukaryotic cell cycle. Required for entry into S-phase and mitosis. Acts as a component of the kinase complex that phosphorylates the repetitive C-terminus of RNA polymerase II. May function in concert with npp-16 to arrest prophase blastomeres in response to anoxia. The chain is Cyclin-dependent kinase 1 (cdk-1) from Caenorhabditis elegans.